A 402-amino-acid polypeptide reads, in one-letter code: MASWAEPSEPAALRLPGAPLLEGFEVLDGVDDAEEEDDLSGLPPLEDMGQPTVEEAEQPGALAREFLAATEPEPAPAPAPEEWLDILGNGLLRMKTLVPGPKGSSRPLKGQVVTVHLQMSLENGTRVQEEPELAFTLGDCDVIQALDLSVPLMDVGETAMVTADSKYCYGPQGRSPYIPPHAALCLEVTLKTAEDGPDLEMLSGQERVALANRKRECGNAHYQRADFVLAANSYDLAIKAITSNTKVDMTCEEEEELLQLKVKCLNNLAASQLKLDHYRAALRSCSQVLEHQPDNIKALFRKGKVLAQQGEYSEAIPILRAALKLEPSNKTIHAELSKLVKKRAAQRSTETALYRKMLGNPSRLPAKCPGKGAWSIPWKWLFGATAVALGGVALSVVIAARN.

Over residues 28–39 (DGVDDAEEEDDL) the composition is skewed to acidic residues. Residues 28–54 (DGVDDAEEEDDLSGLPPLEDMGQPTVE) form a disordered region. One can recognise a PPIase FKBP-type domain in the interval 110-194 (GQVVTVHLQM…CLEVTLKTAE (85 aa)). The stretch at 211–244 (ANRKRECGNAHYQRADFVLAANSYDLAIKAITSN) is one TPR 1 repeat. Glycyl lysine isopeptide (Lys-Gly) (interchain with G-Cter in ubiquitin) cross-links involve residues Lys-239, Lys-261, Lys-263, and Lys-274. 2 TPR repeats span residues 262–295 (VKCL…QPDN) and 296–329 (IKAL…EPSN). Ser-286 carries the phosphoserine modification. Glycyl lysine isopeptide (Lys-Gly) (interchain with G-Cter in ubiquitin) cross-links involve residues Lys-297, Lys-304, Lys-324, Lys-330, Lys-338, Lys-341, and Lys-342. A helical transmembrane segment spans residues 380–400 (WLFGATAVALGGVALSVVIAA).

In terms of assembly, homomultimers or heteromultimers (Potential). Forms heterodimer with calmodulin. When activated by calmodulin and calcium, interacts with the BH4 domain of BCL2 and weakly with BCLX isoform Bcl-X(L). Does not bind and inhibit calcineurin. Interacts with ZFYVE27; may negatively regulate ZFYVE27 phosphorylation. Ca(2+) serves as cofactor. Ubiquitinated by PRKN during mitophagy, leading to its degradation and enhancement of mitophagy. Deubiquitinated by USP30. In terms of tissue distribution, detected throughout the embryonic body, in caudal neural tube, limbs and head. Detected in adult retina, brain, heart, kidney, liver, pancreas, lung, testis and urinary bladder (at protein level). Detected in adult brain, kidney, liver, testis and trigeminal nerve, and in embryo. Detected at lower levels in lung, spleen, heart and ovary. Widely expressed in forebrain. Detected in the Purkinje cell layer in the cerebellum and in hippocampus neurons.

The protein localises to the mitochondrion membrane. The catalysed reaction is [protein]-peptidylproline (omega=180) = [protein]-peptidylproline (omega=0). Its function is as follows. Constitutively inactive PPiase, which becomes active when bound to calmodulin and calcium. Seems to act as a chaperone for BCL2, targets it to the mitochondria and modulates its phosphorylation state. The BCL2/FKBP8/calmodulin/calcium complex probably interferes with the binding of BCL2 to its targets. The active form of FKBP8 may therefore play a role in the regulation of apoptosis. Required for normal embryonic development. The sequence is that of Peptidyl-prolyl cis-trans isomerase FKBP8 (Fkbp8) from Mus musculus (Mouse).